The primary structure comprises 284 residues: Bifunctional protein FolD (284 aa).

Glycine 166–serine 168 serves as a coordination point for NADP(+).

Belongs to the tetrahydrofolate dehydrogenase/cyclohydrolase family. As to quaternary structure, homodimer.

It carries out the reaction (6R)-5,10-methylene-5,6,7,8-tetrahydrofolate + NADP(+) = (6R)-5,10-methenyltetrahydrofolate + NADPH. It catalyses the reaction (6R)-5,10-methenyltetrahydrofolate + H2O = (6R)-10-formyltetrahydrofolate + H(+). It functions in the pathway one-carbon metabolism; tetrahydrofolate interconversion. In terms of biological role, catalyzes the oxidation of 5,10-methylenetetrahydrofolate to 5,10-methenyltetrahydrofolate and then the hydrolysis of 5,10-methenyltetrahydrofolate to 10-formyltetrahydrofolate. The polypeptide is Bifunctional protein FolD (Legionella pneumophila (strain Corby)).